The following is a 102-amino-acid chain: Flagellar hook-basal body complex protein FliE 1 (102 aa).

This sequence belongs to the FliE family.

Its subcellular location is the bacterial flagellum basal body. In Bradyrhizobium diazoefficiens (strain JCM 10833 / BCRC 13528 / IAM 13628 / NBRC 14792 / USDA 110), this protein is Flagellar hook-basal body complex protein FliE 1 (fliE1).